Reading from the N-terminus, the 625-residue chain is MNNFILLEEQLIKKSQQKRRTSPSNFKVRFFVLTKASLAYFEDRHGKKRTLKGSIELSRIKCVEIVKSDISIPCHYKYPFQTLVYLQVVHDNYLLYVFAPDCESRQRWVLTLKEETRNNNSLVSKYHPNFWMDGRWRCCSQLEKPAVGCAPYDPSKNASKKPLPPTPEDNRRSFQEPEETLVIALYDYQTNDPQELALRCDEEYYLLDSSEIHWWRVQDKNGHEGYAPSSYLVEKSPNNLETYEWYNKSISRDKAEKLLLDTGKEGAFMVRDSRTPGTYTVSVFTKAIISENPCIKHYHIKETNDSPKRYYVAEKYVFDSIPLLIQYHQYNGGGLVTRLRYPVCSWRQKAPVTAGLRYGKWVIQPSELTFVQEIGSGQFGLVHLGYWLNKDKVAIKTIQEGAMSEEDFIEEAEVMMKLSHPKLVQLYGVCLEQAPICLVFEFMEHGCLSDYLRSQRGLFAAETLLGMCLDVCEGMAYLEKACVIHRDLAARNCLVGENQVIKVSDFGMTRFVLDDQYTSSTGTKFPVKWASPEVFSFSRYSSKSDVWSFGVLMWEVFSEGKIPYENRSNSEVVEDISTGFRLYKPRLASCHVYQIMNHCWKEKPEDRPPFSQLLSQLAEIAEAGL.

One can recognise a PH domain in the interval 4-117; sequence FILLEEQLIK…WVLTLKEETR (114 aa). Residues 119-155 form a Btk-type zinc finger; the sequence is NNSLVSKYHPNFWMDGRWRCCSQLEKPAVGCAPYDPS. Residues His127, Cys138, Cys139, and Cys149 each coordinate Zn(2+). A disordered region spans residues 153-174; sequence DPSKNASKKPLPPTPEDNRRSF. The SH3 domain maps to 177–237; the sequence is PEETLVIALY…PSSYLVEKSP (61 aa). Tyr186 is subject to Phosphotyrosine; by autocatalysis. The SH2 domain occupies 245–343; it reads WYNKSISRDK…GLVTRLRYPV (99 aa). The 253-residue stretch at 368 to 620 folds into the Protein kinase domain; sequence LTFVQEIGSG…SQLLSQLAEI (253 aa). ATP is bound by residues 374–382 and Lys396; that span reads IGSGQFGLV. Asp487 (proton acceptor) is an active-site residue. Tyr517 carries the post-translational modification Phosphotyrosine; by LCK. A Phosphoserine modification is found at Ser570.

This sequence belongs to the protein kinase superfamily. Tyr protein kinase family. TEC subfamily. As to quaternary structure, homooligomerizes; this association negatively regulates kinase activity. Interacts with PPIA/CYPA; this interaction regulates TCR signal strength via a proline-directed conformational switch in ITK. Interacts with THEMIS. Interacts with FASLG. Interacts with VAV1; this interaction is important for VAV1 localization and TCR-induced actin polarization. Interacts with TBX21. Requires Zn(2+) as cofactor. Post-translationally, phosphorylated at Tyr-517 in the activation loop of the kinase domain by LCK. Subsequent autophosphorylation at Tyr-186 leads to the kinase activation. The autophosphorylated Tyr-186 lies within the substrate binding sequence of the SH3 domain. In terms of processing, ubiquitinated. Is detected in the thymus, lymph node and very faintly in the spleen, but is not detected in the liver, lung, kidney, heart, brain, intestine or testis. Expressed in T-lymphocytes and mast cells. It may also be expressed in natural killer cells.

It is found in the cytoplasm. The protein resides in the nucleus. The enzyme catalyses L-tyrosyl-[protein] + ATP = O-phospho-L-tyrosyl-[protein] + ADP + H(+). Its function is as follows. Tyrosine kinase that plays an essential role in regulation of the adaptive immune response. Regulates the development, function and differentiation of conventional T-cells and nonconventional NKT-cells. When antigen presenting cells (APC) activate T-cell receptor (TCR), a series of phosphorylation lead to the recruitment of ITK to the cell membrane, in the vicinity of the stimulated TCR receptor, where it is phosphorylated by LCK. Phosphorylation leads to ITK autophosphorylation and full activation. Once activated, phosphorylates PLCG1, leading to the activation of this lipase and subsequent cleavage of its substrates. In turn, the endoplasmic reticulum releases calcium in the cytoplasm and the nuclear activator of activated T-cells (NFAT) translocates into the nucleus to perform its transcriptional duty. Phosphorylates 2 essential adapter proteins: the linker for activation of T-cells/LAT protein and LCP2. Then, a large number of signaling molecules such as VAV1 are recruited and ultimately lead to lymphokine production, T-cell proliferation and differentiation. Required for TCR-mediated calcium response in gamma-delta T-cells, may also be involved in the modulation of the transcriptomic signature in the Vgamma2-positive subset of immature gamma-delta T-cells. Phosphorylates TBX21 at 'Tyr-525' and mediates its interaction with GATA3. This is Tyrosine-protein kinase ITK/TSK (Itk) from Mus musculus (Mouse).